The sequence spans 429 residues: Glucose-1-phosphate adenylyltransferase (429 aa).

Residues Gly162, Glu177–Lys178, and Ser209 contribute to the alpha-D-glucose 1-phosphate site.

It belongs to the bacterial/plant glucose-1-phosphate adenylyltransferase family. In terms of assembly, homotetramer.

The enzyme catalyses alpha-D-glucose 1-phosphate + ATP + H(+) = ADP-alpha-D-glucose + diphosphate. It participates in glycan biosynthesis; glycogen biosynthesis. In terms of biological role, involved in the biosynthesis of ADP-glucose, a building block required for the elongation reactions to produce glycogen. Catalyzes the reaction between ATP and alpha-D-glucose 1-phosphate (G1P) to produce pyrophosphate and ADP-Glc. In Gloeothece citriformis (strain PCC 7424) (Cyanothece sp. (strain PCC 7424)), this protein is Glucose-1-phosphate adenylyltransferase.